A 335-amino-acid chain; its full sequence is Ferredoxin--NADP reductase (335 aa).

FAD is bound by residues aspartate 34, glutamine 42, tyrosine 47, alanine 87, phenylalanine 121, aspartate 287, and threonine 328.

Belongs to the ferredoxin--NADP reductase type 2 family. Homodimer. Requires FAD as cofactor.

It catalyses the reaction 2 reduced [2Fe-2S]-[ferredoxin] + NADP(+) + H(+) = 2 oxidized [2Fe-2S]-[ferredoxin] + NADPH. This Rickettsia felis (strain ATCC VR-1525 / URRWXCal2) (Rickettsia azadi) protein is Ferredoxin--NADP reductase.